Consider the following 196-residue polypeptide: Large ribosomal subunit protein eL15 (196 aa).

Basic residues predominate over residues 69 to 98; the sequence is RKGGSRKQRHKAGRRSKRQGVNRLSRRKSI. 2 disordered regions span residues 69 to 100 and 161 to 196; these read RKGG…SIQR and FRGL…RQGK. A compositionally biased stretch (polar residues) spans 186–196; it reads PSVTGNDRQGK.

The protein belongs to the eukaryotic ribosomal protein eL15 family.

This is Large ribosomal subunit protein eL15 from Halorubrum lacusprofundi (strain ATCC 49239 / DSM 5036 / JCM 8891 / ACAM 34).